The following is a 139-amino-acid chain: Large ribosomal subunit protein uL16 (139 aa).

Over residues 1–19 (MLIPRRVKYRKQHHPKRTG) the composition is skewed to basic residues. The tract at residues 1–23 (MLIPRRVKYRKQHHPKRTGAAKG) is disordered.

This sequence belongs to the universal ribosomal protein uL16 family. As to quaternary structure, part of the 50S ribosomal subunit.

Functionally, binds 23S rRNA and is also seen to make contacts with the A and possibly P site tRNAs. The chain is Large ribosomal subunit protein uL16 from Cutibacterium acnes (strain DSM 16379 / KPA171202) (Propionibacterium acnes).